The primary structure comprises 448 residues: tRNA modification GTPase MnmE (448 aa).

(6S)-5-formyl-5,6,7,8-tetrahydrofolate is bound by residues Arg22, Glu83, and Arg122. The region spanning 219–369 (GVKTVIVGRP…LESEILKTLK (151 aa)) is the TrmE-type G domain. A K(+)-binding site is contributed by Asn229. GTP-binding positions include 229–234 (NVGKSS), 248–254 (SDIAGTT), and 273–276 (DTAG). Ser233 provides a ligand contact to Mg(2+). Residues Ser248, Ile250, and Thr253 each coordinate K(+). Residue Thr254 coordinates Mg(2+). A (6S)-5-formyl-5,6,7,8-tetrahydrofolate-binding site is contributed by Lys448.

This sequence belongs to the TRAFAC class TrmE-Era-EngA-EngB-Septin-like GTPase superfamily. TrmE GTPase family. As to quaternary structure, homodimer. Heterotetramer of two MnmE and two MnmG subunits. Requires K(+) as cofactor.

It localises to the cytoplasm. Exhibits a very high intrinsic GTPase hydrolysis rate. Involved in the addition of a carboxymethylaminomethyl (cmnm) group at the wobble position (U34) of certain tRNAs, forming tRNA-cmnm(5)s(2)U34. The protein is tRNA modification GTPase MnmE of Acholeplasma laidlawii (strain PG-8A).